The sequence spans 388 residues: S-adenosylmethionine synthase (388 aa).

His16 contacts ATP. Asp18 serves as a coordination point for Mg(2+). Glu44 contributes to the K(+) binding site. Residues Glu57 and Gln100 each coordinate L-methionine. The interval 100–110 (QSPEIAQGVDR) is flexible loop. Residues 165 to 167 (DAK), 231 to 232 (KF), Asp240, 246 to 247 (RK), Ala263, and Lys267 contribute to the ATP site. Asp240 is a binding site for L-methionine. Lys271 is a binding site for L-methionine.

Belongs to the AdoMet synthase family. Homotetramer; dimer of dimers. It depends on Mg(2+) as a cofactor. K(+) is required as a cofactor.

It is found in the cytoplasm. The enzyme catalyses L-methionine + ATP + H2O = S-adenosyl-L-methionine + phosphate + diphosphate. The protein operates within amino-acid biosynthesis; S-adenosyl-L-methionine biosynthesis; S-adenosyl-L-methionine from L-methionine: step 1/1. Functionally, catalyzes the formation of S-adenosylmethionine (AdoMet) from methionine and ATP. The overall synthetic reaction is composed of two sequential steps, AdoMet formation and the subsequent tripolyphosphate hydrolysis which occurs prior to release of AdoMet from the enzyme. The polypeptide is S-adenosylmethionine synthase (Psychrobacter sp. (strain PRwf-1)).